Here is a 218-residue protein sequence, read N- to C-terminus: Glutathione S-transferase Mu 1 (218 aa).

In terms of domain architecture, GST N-terminal spans 2–88 (PMTLGYWDVR…YLARKHGLCG (87 aa)). Glutathione is bound by residues 7-8 (YW), 46-50 (WLSEK), 59-60 (NL), and 72-73 (QS). The 119-residue stretch at 90-208 (TEEERIRVDI…KSSRFIRVPV (119 aa)) folds into the GST C-terminal domain. Y116 contributes to the substrate binding site.

Belongs to the GST superfamily. Mu family. Homodimer. Well expressed in rabbit liver, brain and kidney.

The protein resides in the cytoplasm. The enzyme catalyses RX + glutathione = an S-substituted glutathione + a halide anion + H(+). Its function is as follows. Conjugation of reduced glutathione to a wide number of exogenous and endogenous hydrophobic electrophiles. In Oryctolagus cuniculus (Rabbit), this protein is Glutathione S-transferase Mu 1.